The sequence spans 305 residues: Oxygen-dependent coproporphyrinogen-III oxidase (305 aa).

Position 92 (Ser-92) interacts with substrate. The a divalent metal cation site is built by His-96 and His-106. His-106 functions as the Proton donor in the catalytic mechanism. 108–110 (NVR) lines the substrate pocket. A divalent metal cation contacts are provided by His-145 and His-175. Positions 239–274 (YVEFNLLFDRGTLFGLQSGGRAESILISLPPLVRWE) are important for dimerization. 257–259 (GGR) serves as a coordination point for substrate.

The protein belongs to the aerobic coproporphyrinogen-III oxidase family. In terms of assembly, homodimer. A divalent metal cation is required as a cofactor.

The protein resides in the cytoplasm. The catalysed reaction is coproporphyrinogen III + O2 + 2 H(+) = protoporphyrinogen IX + 2 CO2 + 2 H2O. It participates in porphyrin-containing compound metabolism; protoporphyrin-IX biosynthesis; protoporphyrinogen-IX from coproporphyrinogen-III (O2 route): step 1/1. Involved in the heme biosynthesis. Catalyzes the aerobic oxidative decarboxylation of propionate groups of rings A and B of coproporphyrinogen-III to yield the vinyl groups in protoporphyrinogen-IX. This is Oxygen-dependent coproporphyrinogen-III oxidase from Xylella fastidiosa (strain Temecula1 / ATCC 700964).